We begin with the raw amino-acid sequence, 132 residues long: SH2 domain-containing protein 1B (132 aa).

An SH2 domain is found at 5 to 101 (YYHGRLTKQD…GMVVHLLKPI (97 aa)). Phosphotyrosine is present on Tyr127.

As to quaternary structure, binds to the phosphorylated receptors CD84, SLAMF1, LY9 and CD244. Does not bind to non-phosphorylated SLAMF1. Interacts with SLAMF7 (via ITSM phosphorylated on 'Tyr-304'). Interacts with Src kinases HCK, LYN, FYN, FGR and LCK (via kinase domains). Interacts (phosphorylated at Tyr-127) with PLCG1.

In terms of biological role, cytoplasmic adapter regulating receptors of the signaling lymphocytic activation molecule (SLAM) family such as CD84, SLAMF1, LY9 and CD244. In SLAM signaling seems to cooperate with SH2D1A/SAP. Plays a role in regulation of effector functions of natural killer (NK) cells by controlling signal transduction through CD244/2B4 without effecting its tyrosine phosphorylation; downstream signaling involves PLCG1 and ERK activation. Activation of SLAMF7-mediated NK cell function does not effect receptor tyrosine phosphorylation but distal signaling. In the context of NK cell-mediated cytotoxicity does not enhance conjugate formation with target cells but stimulates polarization of the microtubule-organizing center and cytotoxic granules toward the NK cell synapse. Negatively regulates CD40-induced cytokine production in dendritic cells downstream of SLAM family receptors probably by inducing activation of the PI3K pathway to inhibit p38 MAPK and JNK activation. This is SH2 domain-containing protein 1B (SH2D1B) from Homo sapiens (Human).